Here is a 463-residue protein sequence, read N- to C-terminus: NEDD8-activating enzyme E1 catalytic subunit (463 aa).

Residue alanine 2 is modified to N-acetylalanine. The interval 53–70 (HPDFEPSTESLQFLLDTC) is interaction with UBE2M N-terminus. ATP is bound by residues 100-124 (DMDT…GRPK) and 148-171 (IQDF…SIIA). Interaction with UBE2M N-terminus regions lie at residues 157 to 161 (RQFHI) and 192 to 217 (PSSI…LPGM). The segment at 227 to 229 (LYP) is interaction with NEDD8. Catalysis depends on cysteine 237, which acts as the Glycyl thioester intermediate. 2 interaction with NAE1 regions span residues 242–248 (MPRLPEH) and 292–295 (YNIR). Positions 331 to 338 (IATSAYIP) are interaction with UBE2M N-terminus. Positions 352–357 (YTYTFE) are interaction with NEDD8. Residues 368 to 463 (SQLPQNIQFS…TVLFKLHFTS (96 aa)) form an interaction with UBE2M core domain region.

Belongs to the ubiquitin-activating E1 family. UBA3 subfamily. As to quaternary structure, heterodimer of UBA3 and NAE1. Interacts with NEDD8, UBE2F and UBE2M. Binds ESR1 and ESR2 with bound steroid ligand. Interacts with TBATA. As to expression, ubiquitously expressed.

The catalysed reaction is ATP + [NEDD8 protein] + [E1 NEDD8-activating enzyme]-L-cysteine = AMP + diphosphate + [E1 NEDD8-activating enzyme]-S-[NEDD8 protein]-yl-L-cysteine.. It functions in the pathway protein modification; protein neddylation. Binding of TP53BP2 to the regulatory subunit NAE1 decreases activity. Functionally, catalytic subunit of the dimeric UBA3-NAE1 E1 enzyme. E1 activates NEDD8 by first adenylating its C-terminal glycine residue with ATP, thereafter linking this residue to the side chain of the catalytic cysteine, yielding a NEDD8-UBA3 thioester and free AMP. E1 finally transfers NEDD8 to the catalytic cysteine of UBE2M. Down-regulates steroid receptor activity. Necessary for cell cycle progression. The polypeptide is NEDD8-activating enzyme E1 catalytic subunit (UBA3) (Homo sapiens (Human)).